The primary structure comprises 203 residues: Proteasome subunit beta 2 (203 aa).

Residues 1–9 constitute a propeptide, removed in mature form; by autocatalysis; that stretch reads MGEEFQVGA. Residue Thr10 is the Nucleophile of the active site.

It belongs to the peptidase T1B family. The 20S proteasome core is composed of 14 alpha and 14 beta subunits that assemble into four stacked heptameric rings, resulting in a barrel-shaped structure. The two inner rings, each composed of seven catalytic beta subunits, are sandwiched by two outer rings, each composed of seven alpha subunits. The catalytic chamber with the active sites is on the inside of the barrel. Has a gated structure, the ends of the cylinder being occluded by the N-termini of the alpha-subunits. Is capped at one or both ends by the proteasome regulatory ATPase, PAN.

It localises to the cytoplasm. The enzyme catalyses Cleavage of peptide bonds with very broad specificity.. Its activity is regulated as follows. The formation of the proteasomal ATPase PAN-20S proteasome complex, via the docking of the C-termini of PAN into the intersubunit pockets in the alpha-rings, triggers opening of the gate for substrate entry. Interconversion between the open-gate and close-gate conformations leads to a dynamic regulation of the 20S proteasome proteolysis activity. Its function is as follows. Component of the proteasome core, a large protease complex with broad specificity involved in protein degradation. The sequence is that of Proteasome subunit beta 2 from Pyrobaculum neutrophilum (strain DSM 2338 / JCM 9278 / NBRC 100436 / V24Sta) (Thermoproteus neutrophilus).